We begin with the raw amino-acid sequence, 155 residues long: S-ribosylhomocysteine lyase (155 aa).

Positions 58, 62, and 125 each coordinate Fe cation.

This sequence belongs to the LuxS family. In terms of assembly, homodimer. The cofactor is Fe cation.

The catalysed reaction is S-(5-deoxy-D-ribos-5-yl)-L-homocysteine = (S)-4,5-dihydroxypentane-2,3-dione + L-homocysteine. Involved in the synthesis of autoinducer 2 (AI-2) which is secreted by bacteria and is used to communicate both the cell density and the metabolic potential of the environment. The regulation of gene expression in response to changes in cell density is called quorum sensing. Catalyzes the transformation of S-ribosylhomocysteine (RHC) to homocysteine (HC) and 4,5-dihydroxy-2,3-pentadione (DPD). The chain is S-ribosylhomocysteine lyase from Helicobacter pylori (strain P12).